The following is a 435-amino-acid chain: ATP-dependent RNA helicase RhlB (435 aa).

Residues 9-37 carry the Q motif motif; it reads QKFADFSLQTEIKTALNESGFEYCTPIQA. In terms of domain architecture, Helicase ATP-binding spans 40–219; sequence LPILLQKKDI…YDHMNEPEKV (180 aa). Position 53-60 (53-60) interacts with ATP; it reads AQTGTGKT. The DEAD box motif lies at 165–168; the sequence is DEAD. Residues 243–390 form the Helicase C-terminal domain; it reads KMRLLLTLLE…VTNYDSEALL (148 aa). Residues 395-435 form a disordered region; that stretch reads APVRVHRKHNSRPQGRSGSGGKPRSGNRNAPRRHDKTRRHS. Positions 424–435 are enriched in basic residues; that stretch reads APRRHDKTRRHS.

Belongs to the DEAD box helicase family. RhlB subfamily. In terms of assembly, component of the RNA degradosome, which is a multiprotein complex involved in RNA processing and mRNA degradation.

The protein resides in the cytoplasm. The enzyme catalyses ATP + H2O = ADP + phosphate + H(+). Functionally, DEAD-box RNA helicase involved in RNA degradation. Has RNA-dependent ATPase activity and unwinds double-stranded RNA. This chain is ATP-dependent RNA helicase RhlB, found in Shewanella sediminis (strain HAW-EB3).